Consider the following 287-residue polypeptide: MAAITAALVKELRERTGEGMMDCKKALEKAGGDIEKAIDDMRASGAIKAAKKAGNVAAEGAIAIKDDGKAAVLIEVNSQTDFLALQDDFKNFVAASVDKAFADKLTDAAPLIAAQEAAREALVAKVGENVNIRRLVRVEGDVVGTYLHGNKIGVAVVLKGGDVELAKDIAMHVAASNPEFLLPSQVSDEAIEREKAVFLQLNEEKIKGKPENIVENMVKGRISKFLAEASLVEQAFVKNPEIKVGELAKKGGAEIVSFTYFKVGEGIEKPVDNFAEEVAAQLAAAKQ.

The segment at 80–83 (TDFL) is involved in Mg(2+) ion dislocation from EF-Tu.

The protein belongs to the EF-Ts family.

It is found in the cytoplasm. Functionally, associates with the EF-Tu.GDP complex and induces the exchange of GDP to GTP. It remains bound to the aminoacyl-tRNA.EF-Tu.GTP complex up to the GTP hydrolysis stage on the ribosome. The protein is Elongation factor Ts of Pseudomonas fluorescens (strain Pf0-1).